A 180-amino-acid chain; its full sequence is Nucleoside-triphosphatase THEP1 (180 aa).

Residues 18-25 (GRPGVGKT) and 104-111 (LVIMDEIG) contribute to the ATP site.

Belongs to the THEP1 NTPase family.

The catalysed reaction is a ribonucleoside 5'-triphosphate + H2O = a ribonucleoside 5'-diphosphate + phosphate + H(+). Functionally, has nucleotide phosphatase activity towards ATP, GTP, CTP, TTP and UTP. May hydrolyze nucleoside diphosphates with lower efficiency. The protein is Nucleoside-triphosphatase THEP1 of Metallosphaera sedula (strain ATCC 51363 / DSM 5348 / JCM 9185 / NBRC 15509 / TH2).